The chain runs to 252 residues: F-box/SPRY domain-containing protein 1 (252 aa).

One can recognise an F-box domain in the interval 1–48 (MVDPLCNYNVLEAIFSYLELSDLSRCSQVCKSWYHFLNDENSDVWRWH). The B30.2/SPRY domain occupies 58–250 (IKSDLLASVT…VSMVYLGTPL (193 aa)).

The protein belongs to the FBXO45/Fsn family. As to quaternary structure, component of an E3 ubiquitin ligase complex composed of hiw and Fsn.

It localises to the synapse. It participates in protein modification; protein ubiquitination. Required in the presynaptic motoneuron to down-regulate the levels of wnd and restrain synaptic terminal growth at the neuromuscular junction (NMJ). This Drosophila mojavensis (Fruit fly) protein is F-box/SPRY domain-containing protein 1.